We begin with the raw amino-acid sequence, 137 residues long: Small ribosomal subunit protein uS19 (137 aa).

This sequence belongs to the universal ribosomal protein uS19 family.

Protein S19 forms a complex with S13 that binds strongly to the 16S ribosomal RNA. The protein is Small ribosomal subunit protein uS19 of Methanospirillum hungatei JF-1 (strain ATCC 27890 / DSM 864 / NBRC 100397 / JF-1).